The chain runs to 333 residues: tRNA(Ile)-lysidine synthase (333 aa).

ATP is bound at residue 25 to 30; the sequence is SGGPDS.

This sequence belongs to the tRNA(Ile)-lysidine synthase family.

It localises to the cytoplasm. The enzyme catalyses cytidine(34) in tRNA(Ile2) + L-lysine + ATP = lysidine(34) in tRNA(Ile2) + AMP + diphosphate + H(+). Ligates lysine onto the cytidine present at position 34 of the AUA codon-specific tRNA(Ile) that contains the anticodon CAU, in an ATP-dependent manner. Cytidine is converted to lysidine, thus changing the amino acid specificity of the tRNA from methionine to isoleucine. This chain is tRNA(Ile)-lysidine synthase, found in Ureaplasma parvum serovar 3 (strain ATCC 700970).